A 375-amino-acid polypeptide reads, in one-letter code: Probable disease resistance protein At1g52660 (375 aa).

Residues 158–372 form the NB-ARC domain; sequence ENTGIIGLYG…LSNSPPNFSG (215 aa). Residue 167 to 174 participates in ATP binding; the sequence is GVEGVGKT.

In terms of biological role, possible disease resistance protein. The protein is Probable disease resistance protein At1g52660 of Arabidopsis thaliana (Mouse-ear cress).